Reading from the N-terminus, the 230-residue chain is Somatolactin (230 aa).

The signal sequence occupies residues 1 to 23 (MNMMTVKQGVWAALLWPYLLAAS). 3 disulfides stabilise this stretch: cysteine 28–cysteine 38, cysteine 88–cysteine 204, and cysteine 221–cysteine 229. 2 N-linked (GlcNAc...) asparagine glycosylation sites follow: asparagine 137 and asparagine 144.

This sequence belongs to the somatotropin/prolactin family.

It localises to the secreted. This Hippoglossus hippoglossus (Atlantic halibut) protein is Somatolactin.